Here is a 446-residue protein sequence, read N- to C-terminus: Histidine--tRNA ligase (446 aa).

It belongs to the class-II aminoacyl-tRNA synthetase family. As to quaternary structure, homodimer.

It is found in the cytoplasm. The catalysed reaction is tRNA(His) + L-histidine + ATP = L-histidyl-tRNA(His) + AMP + diphosphate + H(+). This Paraburkholderia phymatum (strain DSM 17167 / CIP 108236 / LMG 21445 / STM815) (Burkholderia phymatum) protein is Histidine--tRNA ligase.